The chain runs to 341 residues: L-threonine 3-dehydrogenase (341 aa).

Position 38 (Cys38) interacts with Zn(2+). Active-site charge relay system residues include Thr40 and His43. The Zn(2+) site is built by His63, Glu64, Cys93, Cys96, Cys99, and Cys107. NAD(+) is bound by residues Ile175, Asp195, Arg200, 262–264, and 286–287; these read LGI and IY.

The protein belongs to the zinc-containing alcohol dehydrogenase family. Homotetramer. It depends on Zn(2+) as a cofactor.

Its subcellular location is the cytoplasm. The catalysed reaction is L-threonine + NAD(+) = (2S)-2-amino-3-oxobutanoate + NADH + H(+). The protein operates within amino-acid degradation; L-threonine degradation via oxydo-reductase pathway; glycine from L-threonine: step 1/2. In terms of biological role, catalyzes the NAD(+)-dependent oxidation of L-threonine to 2-amino-3-ketobutyrate. In Escherichia coli O127:H6 (strain E2348/69 / EPEC), this protein is L-threonine 3-dehydrogenase.